The following is a 540-amino-acid chain: Probable G-protein coupled receptor 75 (540 aa).

Over 1-46 (MNTSAPLQNVPNATLLNMPPLHGGNSTSLQEGLRDFIHTATLVTCT) the chain is Extracellular. N-linked (GlcNAc...) asparagine glycosylation is found at Asn2 and Asn25. The chain crosses the membrane as a helical span at residues 47–67 (FLLAIIFCLGSYGNFIVFLSF). Over 68–86 (FDPSFRKFRTNFDFMILNL) the chain is Cytoplasmic. The chain crosses the membrane as a helical span at residues 87–107 (SFCDLFICGVTAPMFTFVLFF). Topologically, residues 108–120 (SSASSIPDSFCFT) are extracellular. Residues 121–141 (FHLTSSGFVIMSLKMVAVIAL) form a helical membrane-spanning segment. Residues 142-160 (HRLRMVMGKQPNCTASFSC) are Cytoplasmic-facing. Residues 161–181 (ILLLTLLLWATSFTLATLATL) form a helical membrane-spanning segment. Topologically, residues 182-205 (RTNKSHLCLPMSSLMDGEGKAILS) are extracellular. Asn184 carries N-linked (GlcNAc...) asparagine glycosylation. The chain crosses the membrane as a helical span at residues 206–226 (LYVVDFTFCVAVVSVSYIMIA). The Cytoplasmic portion of the chain corresponds to 227–318 (QTLRKNAQVK…INFSTAKDSK (92 aa)). The chain crosses the membrane as a helical span at residues 319 to 339 (AVVTCVVIVLSVLVCCLPLGI). At 340-350 (SLVQMVLSDNG) the chain is on the extracellular side. Residues 351–371 (SFILYQFELFGFTLIFFKSGL) form a helical membrane-spanning segment. Residues 372 to 540 (NPFIYSRNSA…SAKQIPIPSV (169 aa)) are Cytoplasmic-facing. Positions 443–475 (DQACGPSHSKESAASPKVSAGHQPCGQSSSTPI) are disordered.

The protein belongs to the G-protein coupled receptor 1 family. As to expression, highly expressed in brain and heart. Also detected in skeletal muscle, liver and kidney. Also expressed by islet cells (at protein level).

The protein localises to the cell membrane. G protein-coupled receptor that is activated by the chemokine CCL5/RANTES. Probably coupled to heterotrimeric Gq proteins, it stimulates inositol trisphosphate production and calcium mobilization upon activation. Together with CCL5/RANTES, may play a role in neuron survival through activation of a downstream signaling pathway involving the PI3, Akt and MAP kinases. CCL5/RANTES may also regulate insulin secretion by pancreatic islet cells through activation of this receptor. The protein is Probable G-protein coupled receptor 75 (Gpr75) of Mus musculus (Mouse).